Here is a 245-residue protein sequence, read N- to C-terminus: Uridylate kinase (245 aa).

Position 13–16 (13–16) interacts with ATP; that stretch reads KLSG. Position 56 (G56) interacts with UMP. The ATP site is built by G57 and R61. Residues D76 and 138–145 contribute to the UMP site; that span reads TGRPFFTT. Positions 166, 172, and 175 each coordinate ATP.

This sequence belongs to the UMP kinase family. As to quaternary structure, homohexamer.

Its subcellular location is the cytoplasm. It catalyses the reaction UMP + ATP = UDP + ADP. Its pathway is pyrimidine metabolism; CTP biosynthesis via de novo pathway; UDP from UMP (UMPK route): step 1/1. Its activity is regulated as follows. Inhibited by UTP. Catalyzes the reversible phosphorylation of UMP to UDP. This is Uridylate kinase from Mycoplasma mobile (strain ATCC 43663 / 163K / NCTC 11711) (Mesomycoplasma mobile).